The sequence spans 43 residues: Peroxidase (43 aa).

Belongs to the peroxidase family. Classical plant (class III) peroxidase subfamily. It depends on Ca(2+) as a cofactor. Heme b serves as cofactor.

The enzyme catalyses 2 a phenolic donor + H2O2 = 2 a phenolic radical donor + 2 H2O. Its function is as follows. Removal of H(2)O(2), oxidation of toxic reductants, biosynthesis and degradation of lignin, suberization, auxin catabolism, response to environmental stresses such as wounding, pathogen attack and oxidative stress. These functions might be dependent on each isozyme/isoform in each plant tissue. This is Peroxidase from Cynara cardunculus var. scolymus (Globe artichoke).